Here is a 184-residue protein sequence, read N- to C-terminus: ATP synthase subunit b, chloroplastic (184 aa).

A helical membrane pass occupies residues 27-49 (LATNPINLSVVLGVLVFFGKGVL).

This sequence belongs to the ATPase B chain family. F-type ATPases have 2 components, F(1) - the catalytic core - and F(0) - the membrane proton channel. F(1) has five subunits: alpha(3), beta(3), gamma(1), delta(1), epsilon(1). F(0) has four main subunits: a(1), b(1), b'(1) and c(10-14). The alpha and beta chains form an alternating ring which encloses part of the gamma chain. F(1) is attached to F(0) by a central stalk formed by the gamma and epsilon chains, while a peripheral stalk is formed by the delta, b and b' chains.

It localises to the plastid. It is found in the chloroplast thylakoid membrane. In terms of biological role, f(1)F(0) ATP synthase produces ATP from ADP in the presence of a proton or sodium gradient. F-type ATPases consist of two structural domains, F(1) containing the extramembraneous catalytic core and F(0) containing the membrane proton channel, linked together by a central stalk and a peripheral stalk. During catalysis, ATP synthesis in the catalytic domain of F(1) is coupled via a rotary mechanism of the central stalk subunits to proton translocation. Component of the F(0) channel, it forms part of the peripheral stalk, linking F(1) to F(0). In Phaseolus vulgaris (Kidney bean), this protein is ATP synthase subunit b, chloroplastic.